Consider the following 213-residue polypeptide: 3-isopropylmalate dehydratase small subunit (213 aa).

This sequence belongs to the LeuD family. LeuD type 1 subfamily. As to quaternary structure, heterodimer of LeuC and LeuD.

It catalyses the reaction (2R,3S)-3-isopropylmalate = (2S)-2-isopropylmalate. The protein operates within amino-acid biosynthesis; L-leucine biosynthesis; L-leucine from 3-methyl-2-oxobutanoate: step 2/4. In terms of biological role, catalyzes the isomerization between 2-isopropylmalate and 3-isopropylmalate, via the formation of 2-isopropylmaleate. This chain is 3-isopropylmalate dehydratase small subunit, found in Neisseria meningitidis serogroup B (strain ATCC BAA-335 / MC58).